The primary structure comprises 120 residues: Small ribosomal subunit protein uS17 (120 aa).

Over residues 1–22 (MMAEAKTGAKATKSAAAGAADG) the composition is skewed to low complexity. Residues 1-46 (MMAEAKTGAKATKSAAAGAADGASKEKGPKHTPSPPKPSGRRKTRI) are disordered.

This sequence belongs to the universal ribosomal protein uS17 family. As to quaternary structure, part of the 30S ribosomal subunit.

One of the primary rRNA binding proteins, it binds specifically to the 5'-end of 16S ribosomal RNA. This Mycobacterium ulcerans (strain Agy99) protein is Small ribosomal subunit protein uS17.